The chain runs to 519 residues: Xylose import ATP-binding protein XylG (519 aa).

ABC transporter domains are found at residues 6–245 (MTMR…VGRE) and 262–507 (FEAR…IRPV). An ATP-binding site is contributed by 38–45 (GENGAGKS).

This sequence belongs to the ABC transporter superfamily. Xylose importer (TC 3.A.1.2.4) family. As to quaternary structure, the complex is composed of two ATP-binding proteins (XylG), two transmembrane proteins (XylH) and a solute-binding protein (XylF).

The protein localises to the cell inner membrane. It carries out the reaction D-xylose(out) + ATP + H2O = D-xylose(in) + ADP + phosphate + H(+). Its function is as follows. Part of the ABC transporter complex XylFGH involved in xylose import. Responsible for energy coupling to the transport system. The chain is Xylose import ATP-binding protein XylG from Paraburkholderia xenovorans (strain LB400).